The chain runs to 98 residues: DNA-directed RNA polymerase subunit Rpo11 (98 aa).

This sequence belongs to the archaeal Rpo11/eukaryotic RPB11/RPC19 RNA polymerase subunit family. As to quaternary structure, part of the RNA polymerase complex.

It localises to the cytoplasm. The enzyme catalyses RNA(n) + a ribonucleoside 5'-triphosphate = RNA(n+1) + diphosphate. In terms of biological role, DNA-dependent RNA polymerase (RNAP) catalyzes the transcription of DNA into RNA using the four ribonucleoside triphosphates as substrates. In Korarchaeum cryptofilum (strain OPF8), this protein is DNA-directed RNA polymerase subunit Rpo11.